The primary structure comprises 78 residues: Small ribosomal subunit protein eS21 (78 aa).

The protein belongs to the eukaryotic ribosomal protein eS21 family.

In Dictyostelium discoideum (Social amoeba), this protein is Small ribosomal subunit protein eS21 (rps21).